The sequence spans 424 residues: UDP-N-acetylglucosamine 1-carboxyvinyltransferase (424 aa).

Phosphoenolpyruvate is bound at residue 22–23 (KN). Residue Arg-98 participates in UDP-N-acetyl-alpha-D-glucosamine binding. Cys-122 acts as the Proton donor in catalysis. Cys-122 carries the 2-(S-cysteinyl)pyruvic acid O-phosphothioketal modification. UDP-N-acetyl-alpha-D-glucosamine is bound by residues 127-131 (RPVDQ), Asp-312, and Ile-334.

It belongs to the EPSP synthase family. MurA subfamily.

It is found in the cytoplasm. It catalyses the reaction phosphoenolpyruvate + UDP-N-acetyl-alpha-D-glucosamine = UDP-N-acetyl-3-O-(1-carboxyvinyl)-alpha-D-glucosamine + phosphate. It functions in the pathway cell wall biogenesis; peptidoglycan biosynthesis. Cell wall formation. Adds enolpyruvyl to UDP-N-acetylglucosamine. The sequence is that of UDP-N-acetylglucosamine 1-carboxyvinyltransferase from Xanthomonas campestris pv. campestris (strain 8004).